The sequence spans 231 residues: Probable caffeoyl-CoA O-methyltransferase 2 (231 aa).

S-adenosyl-L-methionine contacts are provided by residues Thr-53, Asp-75, 77–78, Ser-83, Asp-101, Ala-130, Asp-152, Asp-154, and Tyr-161; that span reads GV. Asp-152 serves as a coordination point for a divalent metal cation. Residues Asp-178 and Asn-179 each coordinate a divalent metal cation.

It belongs to the class I-like SAM-binding methyltransferase superfamily. Cation-dependent O-methyltransferase family. CCoAMT subfamily.

It carries out the reaction (E)-caffeoyl-CoA + S-adenosyl-L-methionine = (E)-feruloyl-CoA + S-adenosyl-L-homocysteine + H(+). The chain is Probable caffeoyl-CoA O-methyltransferase 2 (omt6) from Dictyostelium discoideum (Social amoeba).